The following is a 198-amino-acid chain: Recombination protein RecR (198 aa).

The C4-type zinc finger occupies 57 to 72 (CSVCGHITDQDPCYIC). Residues 80 to 175 (SVICVVQDPK…KLSRIAHGLP (96 aa)) enclose the Toprim domain.

This sequence belongs to the RecR family.

Functionally, may play a role in DNA repair. It seems to be involved in an RecBC-independent recombinational process of DNA repair. It may act with RecF and RecO. The polypeptide is Recombination protein RecR (Bacillus pumilus (strain SAFR-032)).